A 1537-amino-acid polypeptide reads, in one-letter code: Leucine-rich repeat-containing protein 7 (1537 aa).

LRR repeat units lie at residues 23 to 44 (IISV…VFNF), 47 to 68 (TLEE…LFNC), 70 to 91 (ALRK…IASL), 93 to 114 (NLKE…IKCC), 116 to 137 (CLTI…FTQL), 139 to 161 (NLTQ…GRLV), 162 to 183 (KLRI…MHKL), 185 to 206 (QLER…LDQI), 208 to 229 (NLRE…IGKL), 231 to 253 (MLVY…SGCE), 254 to 275 (ALED…IGLL), 277 to 298 (KLTT…IGNL), 300 to 321 (LLEE…IGYL), 323 to 344 (SLRT…IGSC), 346 to 367 (NVTV…IGQM), 369 to 391 (KLRV…TKLK), and 392 to 413 (ELAA…QTEA). A phosphoserine mark is found at S439, S441, and S443. Residues 663–676 (KKESTDESEVDKTH) show a composition bias toward basic and acidic residues. Disordered regions lie at residues 663-709 (KKES…VGSL), 730-759 (FPQP…DRLP), 786-810 (AENA…RRPL), and 824-892 (EQST…SPGV). Polar residues predominate over residues 677–709 (CLNNSVSSGTYSDYSPSQASSGSSNTRVKVGSL). Positions 790–804 (NSNPLLSSKSRSTSS) are enriched in low complexity. Position 831 is a phosphothreonine (T831). At S850 the chain carries Phosphoserine. The span at 859 to 871 (PSKLETTPTTSPL) shows a compositional bias: low complexity. T865 carries the phosphothreonine modification. Phosphoserine is present on S869. Basic and acidic residues predominate over residues 872–882 (PERKEHIKEST). S947, S949, and S1118 each carry phosphoserine. The disordered stretch occupies residues 1136-1159 (ELPPTDRYGRPPYRGGLDRQSSVT). R1149 is modified (omega-N-methylarginine). Position 1233 is a phosphoserine (S1233). 2 disordered regions span residues 1234-1265 (DYNL…SCGK) and 1331-1360 (QKTP…YPLG). Basic and acidic residues predominate over residues 1243 to 1263 (KPSDNSDLKTRPTPVKGEESC). Positions 1332–1354 (KTPSQQSNILDNGQEDVSPSGQW) are enriched in polar residues. Phosphoserine is present on residues S1335 and S1439. Positions 1445-1535 (EQFCVRIEKN…TVDLVIQREL (91 aa)) constitute a PDZ domain.

It belongs to the LAP (LRR and PDZ) protein family. In terms of assembly, interacts with CNKSR2 and DLG4. Interacts with CTNND2/Catenin delta-2. Forms a complex with N-cadherin through CTNND2. Interacts with CAMK2A. As to expression, brain-specific. Isoform 3 is ubiquitously expressed.

It localises to the cytoplasm. It is found in the postsynaptic density. In terms of biological role, required for normal synaptic spine architecture and function. Necessary for DISC1 and GRM5 localization to postsynaptic density complexes and for both N-methyl D-aspartate receptor-dependent and metabotropic glutamate receptor-dependent long term depression. This Homo sapiens (Human) protein is Leucine-rich repeat-containing protein 7 (LRRC7).